We begin with the raw amino-acid sequence, 324 residues long: Tyrosine--tRNA ligase (324 aa).

Tyr-36 is an L-tyrosine binding site. Residues 41-49 (PSGKVHLGH) carry the 'HIGH' region motif. L-tyrosine contacts are provided by Tyr-158, Gln-162, Asp-165, and Gln-180. Residues 215-219 (KMSSS) carry the 'KMSKS' region motif. Position 218 (Ser-218) interacts with ATP.

It belongs to the class-I aminoacyl-tRNA synthetase family. TyrS type 3 subfamily. Homodimer.

It localises to the cytoplasm. The enzyme catalyses tRNA(Tyr) + L-tyrosine + ATP = L-tyrosyl-tRNA(Tyr) + AMP + diphosphate + H(+). Catalyzes the attachment of tyrosine to tRNA(Tyr) in a two-step reaction: tyrosine is first activated by ATP to form Tyr-AMP and then transferred to the acceptor end of tRNA(Tyr). The sequence is that of Tyrosine--tRNA ligase from Methanopyrus kandleri (strain AV19 / DSM 6324 / JCM 9639 / NBRC 100938).